A 774-amino-acid polypeptide reads, in one-letter code: MSGTASLVHTLPASGDSNHRGLHSLKNSRRAADNEPLLRFREAKKVLGDVYGELKDNVAELEGVYKDIKENDFVSSEQREEIEAIGDSIKTIMDTFQRDNMKVVFFGRTSNGKSTTINAMLHEKVLPQGMGHTTCCFLQVEGSEGEVGHLQLDDNPQKIDMKMLGKIGHALSDENSDLPAMGQDSLLKVFHPKKSESGECRLLQNDVVILDSPGVDLSPEFDSWIDKHCLDADVFVLVSNAESTLTQAEKNFFLRVAKKLSKPNVFILNNRWDASAAETENIEDVKKQHLTRFRQFLVDELEVCSEREVNDRIFFVSSREVLESRLKARGLVQKAYQAEGHGTRALEFQNFERHFEHCISRSAIHTKFEAHNRRAHEMIGKMRLNLNSVLTSAAEQRSKLQNNLNESTRTFNECRVNFTQFEKAYREQTEQLRAEVHLKVSADFFEEIARLDAIIDRFEQPFDGSSSGMTKYKEDLAIFVDKCLSSDLEARCTGGLMSRIWNLENDMFQYVTKILAEPYQNKLEEVWRYRAPFKFSICVDVPALVNDFHEDLEFRFTFGLHAIIRRIIAYRSGQPVTAINTNLLTPLSLKQQSEKNSVRDAEASAASEEQAMMTQMVLTSAAFLANGSLGVLVVGGIVYKAVGWRVIAVGGAAYAGLYAWERMRWNSGAKEQHLKEQFRSHLAARMQQVSTAHTHHCETQAIREMDQVFDGLKATVGGVHREMKNDLDVQKTQIDAVDSTIRTLGTIKGKAVFLLRNLEQFASSYLRSDSPPTP.

The disordered stretch occupies residues Met1–Arg29. Over Met1–Val617 the chain is Cytoplasmic. Over residues Arg20–Arg29 the composition is skewed to basic residues. Residues Tyr51–Asn71 adopt a coiled-coil conformation. Positions Gln97–Glu352 constitute a Dynamin-type G domain. The interval Gly107–Ser114 is G1 motif. Ser110–Thr115 contributes to the GTP binding site. The G2 motif stretch occupies residues Thr133 to Thr134. The segment at Asp211 to Gly214 is G3 motif. Asn270–Asp273 provides a ligand contact to GTP. A G4 motif region spans residues Asn270–Asp273. Residue Glu300 is a region of interest, G5 motif. Residue Ser317 participates in GTP binding. A coiled-coil region spans residues Asn385 to Arg415. Residues Leu618–Val638 form a helical membrane-spanning segment. At Tyr639–Lys640 the chain is on the mitochondrial intermembrane side. The chain crosses the membrane as a helical span at residues Ala641 to Glu661. Topologically, residues Arg662–Pro774 are cytoplasmic.

This sequence belongs to the TRAFAC class dynamin-like GTPase superfamily. Dynamin/Fzo/YdjA family. Mitofusin subfamily. Interacts with ced-9; interaction may be suppressed by interaction of ced-9 with egl-1.

Its subcellular location is the mitochondrion outer membrane. It carries out the reaction GTP + H2O = GDP + phosphate + H(+). Probable transmembrane GTPase. Mediates mitochondrial fusion. Fusion of mitochondria occurs in many cell types and constitutes an important step in mitochondria morphology, which is balanced between fusion and fission. Dispensable for normal apoptotic processes during embryonic development. This chain is Transmembrane GTPase fzo-1, found in Caenorhabditis elegans.